The primary structure comprises 212 residues: Adenylate kinase (212 aa).

ATP is bound at residue 10–15 (GAGKGT). Residues 30–59 (STGDMFRAAMANQTEMGRLAKSYIDKGELV) are NMP. Residues T31, R36, 57–59 (ELV), 86–89 (GYPR), and Q93 contribute to the AMP site. The segment at 127–159 (GRIINRKTGETFHKVFNPPVDYKEEDYYQREDD) is LID. Residues R128 and 137-138 (TF) each bind ATP. Residues R156 and R167 each coordinate AMP. Residue Q195 participates in ATP binding.

This sequence belongs to the adenylate kinase family. Monomer.

It is found in the cytoplasm. The catalysed reaction is AMP + ATP = 2 ADP. It participates in purine metabolism; AMP biosynthesis via salvage pathway; AMP from ADP: step 1/1. In terms of biological role, catalyzes the reversible transfer of the terminal phosphate group between ATP and AMP. Plays an important role in cellular energy homeostasis and in adenine nucleotide metabolism. In Streptococcus pyogenes serotype M5 (strain Manfredo), this protein is Adenylate kinase.